The sequence spans 361 residues: Peptide chain release factor 1 (361 aa).

Gln236 bears the N5-methylglutamine mark. Positions 285–309 are enriched in basic and acidic residues; that stretch reads NAKDSARAADRKAQVGSGDRSERIR. Residues 285-312 are disordered; it reads NAKDSARAADRKAQVGSGDRSERIRTYN.

This sequence belongs to the prokaryotic/mitochondrial release factor family. Post-translationally, methylated by PrmC. Methylation increases the termination efficiency of RF1.

It is found in the cytoplasm. In terms of biological role, peptide chain release factor 1 directs the termination of translation in response to the peptide chain termination codons UAG and UAA. The sequence is that of Peptide chain release factor 1 from Methylobacterium radiotolerans (strain ATCC 27329 / DSM 1819 / JCM 2831 / NBRC 15690 / NCIMB 10815 / 0-1).